The sequence spans 184 residues: Tumor necrosis factor alpha-induced protein 8-like protein 2 (184 aa).

Ser-3 carries the phosphoserine; by MAP3K7 modification.

This sequence belongs to the TNFAIP8 family. TNFAIP8L2 subfamily. In terms of assembly, may interact with CASP8; however, such result is unclear since PubMed:19079267 could not reproduce the interaction with CASP8. Interacts with RAC1. In terms of processing, phosphorylated by TAK1/MAP3K7; this phosphorylation triggers association with BTRC and subsequent ubiquitination and degradation. Post-translationally, ubiquitinated in a BTRC-depdent manner; leading to degradation mediated through the proteasome pathway. In terms of tissue distribution, expressed in T-cells, B-cells, macrophages, neurons in the brain and brainstem, and stratified squamous epithelia of the esophagus, cervix and skin.

It is found in the cytoplasm. It localises to the nucleus. The protein localises to the lysosome. Functionally, acts as a negative regulator of innate and adaptive immunity by maintaining immune homeostasis. Plays a regulatory role in the Toll-like signaling pathway by determining the strength of LPS-induced signaling and gene expression. Inhibits TCR-mediated T-cell activation and negatively regulate T-cell function to prevent hyperresponsiveness. Also inhibits autolysosome formation via negatively modulating MTOR activation by interacting with RAC1 and promoting the disassociation of the RAC1-MTOR complex. Plays an essential role in NK-cell biology by acting as a checkpoint and displaying an expression pattern correlating with NK-cell maturation process and by negatively regulating NK-cell maturation and antitumor immunity. Mechanistically, suppresses IL-15-triggered mTOR activity in NK-cells. This Homo sapiens (Human) protein is Tumor necrosis factor alpha-induced protein 8-like protein 2 (TNFAIP8L2).